Reading from the N-terminus, the 600-residue chain is DNA polymerase alpha subunit B (600 aa).

The segment at 112-167 is disordered; it reads AYTTPSKGPHKRVSSTPETPLTKRSISTRSPHQLLSPSSFSPSATPSQKYSSRTNR. Over residues 125–140 the composition is skewed to polar residues; it reads SSTPETPLTKRSISTR. Ser-126 bears the Phosphoserine mark. Phosphothreonine is present on residues Thr-127 and Thr-130. Phosphoserine occurs at positions 141, 147, 152, and 154. Positions 141-158 are enriched in low complexity; that stretch reads SPHQLLSPSSFSPSATPS.

This sequence belongs to the DNA polymerase alpha subunit B family. As to quaternary structure, component of the alpha DNA polymerase complex (also known as the alpha DNA polymerase-primase complex) consisting of four subunits: the catalytic subunit POLA1, the regulatory subunit POLA2, and the primase complex subunits PRIM1 and PRIM2 respectively. Within the complex, POLA1 directly interacts with PRIM2. Phosphorylated in a cell cycle-dependent manner, in G2/M phase.

It is found in the nucleus. In terms of biological role, accessory subunit of the DNA polymerase alpha complex (also known as the alpha DNA polymerase-primase complex) which plays an essential role in the initiation of DNA synthesis. During the S phase of the cell cycle, the DNA polymerase alpha complex (composed of a catalytic subunit POLA1, an accessory subunit POLA2 and two primase subunits, the catalytic subunit PRIM1 and the regulatory subunit PRIM2) is recruited to DNA at the replicative forks via direct interactions with MCM10 and WDHD1. The primase subunit of the polymerase alpha complex initiates DNA synthesis by oligomerising short RNA primers on both leading and lagging strands. These primers are initially extended by the polymerase alpha catalytic subunit and subsequently transferred to polymerase delta and polymerase epsilon for processive synthesis on the lagging and leading strand, respectively. The polypeptide is DNA polymerase alpha subunit B (Pola2) (Rattus norvegicus (Rat)).